Consider the following 354-residue polypeptide: Protein RecA (354 aa).

75–82 (GPESSGKT) contributes to the ATP binding site.

It belongs to the RecA family.

It localises to the cytoplasm. Functionally, can catalyze the hydrolysis of ATP in the presence of single-stranded DNA, the ATP-dependent uptake of single-stranded DNA by duplex DNA, and the ATP-dependent hybridization of homologous single-stranded DNAs. It interacts with LexA causing its activation and leading to its autocatalytic cleavage. The sequence is that of Protein RecA from Cupriavidus taiwanensis (strain DSM 17343 / BCRC 17206 / CCUG 44338 / CIP 107171 / LMG 19424 / R1) (Ralstonia taiwanensis (strain LMG 19424)).